The sequence spans 207 residues: LPS-assembly lipoprotein LptE (207 aa).

A signal peptide spans 1-19 (MRHRILTLLLGLAVLVTAG). A lipid anchor (N-palmitoyl cysteine) is attached at Cys-20. Residue Cys-20 is the site of S-diacylglycerol cysteine attachment. The disordered stretch occupies residues 168–207 (KNTQKNGDKPVSDANAAQGSTPTAVNETTLGEPAVSTSAK). The span at 182–207 (NAAQGSTPTAVNETTLGEPAVSTSAK) shows a compositional bias: polar residues.

It belongs to the LptE lipoprotein family. As to quaternary structure, component of the lipopolysaccharide transport and assembly complex. Interacts with LptD.

The protein localises to the cell outer membrane. In terms of biological role, together with LptD, is involved in the assembly of lipopolysaccharide (LPS) at the surface of the outer membrane. Required for the proper assembly of LptD. Binds LPS and may serve as the LPS recognition site at the outer membrane. The sequence is that of LPS-assembly lipoprotein LptE from Yersinia pseudotuberculosis serotype O:1b (strain IP 31758).